The following is a 513-amino-acid chain: Gluconokinase (513 aa).

Residues K16, T261, G300, and 412–416 (GFARS) each bind ATP.

Belongs to the FGGY kinase family.

It carries out the reaction D-gluconate + ATP = 6-phospho-D-gluconate + ADP + H(+). It functions in the pathway carbohydrate acid metabolism; D-gluconate degradation. Catabolite repression by gluconate. The chain is Gluconokinase (gntK) from Bacillus licheniformis.